Consider the following 335-residue polypeptide: tRNA methyltransferase 10 homolog A (335 aa).

Disordered regions lie at residues 1–91 and 279–335; these read MSSE…DRKR and VPAH…PDPQ. Residues Ser22 and Ser24 each carry the phosphoserine modification. Basic and acidic residues predominate over residues 52-62; sequence RLWEEQREQRK. Residues 52–84 adopt a coiled-coil conformation; that stretch reads RLWEEQREQRKEKRKEKRKRKKLERRCQLESNS. Basic residues predominate over residues 63–75; that stretch reads EKRKEKRKRKKLE. In terms of domain architecture, SAM-dependent MTase TRM10-type spans 88-279; the sequence is DRKRIRRHVA…TILPPRKGAV (192 aa). A compositionally biased stretch (basic and acidic residues) spans 304–319; it reads EGEHGRDDPGSPHKEQ. Over residues 320–335 the composition is skewed to low complexity; the sequence is QGQQSSSVSAVSPDPQ. At Ser331 the chain carries Phosphoserine.

This sequence belongs to the class IV-like SAM-binding methyltransferase superfamily. TRM10 family. Interacts with tRNA. In terms of tissue distribution, ubiquitously expressed. Is more abundant in brain and pancreatic islets compared to other tissues (at protein level).

It localises to the nucleus. The protein localises to the nucleolus. It catalyses the reaction guanosine(9) in tRNA + S-adenosyl-L-methionine = N(1)-methylguanosine(9) in tRNA + S-adenosyl-L-homocysteine + H(+). In terms of biological role, S-adenosyl-L-methionine-dependent guanine N(1)-methyltransferase that catalyzes the formation of N(1)-methylguanine at position 9 (m1G9) in tRNAs. Probably not able to catalyze formation of N(1)-methyladenine at position 9 (m1A9) in tRNAs. This Rattus norvegicus (Rat) protein is tRNA methyltransferase 10 homolog A (Trmt10a).